The primary structure comprises 357 residues: Membrane-bound lytic murein transglycosylase C (357 aa).

Residues 1–17 (MKLKKFLVLLLIPFLYA) form the signal peptide. Cys18 is lipidated: N-palmitoyl cysteine. Cys18 is lipidated: S-diacylglycerol cysteine.

This sequence belongs to the transglycosylase Slt family.

The protein resides in the cell outer membrane. It carries out the reaction Exolytic cleavage of the (1-&gt;4)-beta-glycosidic linkage between N-acetylmuramic acid (MurNAc) and N-acetylglucosamine (GlcNAc) residues in peptidoglycan, from either the reducing or the non-reducing ends of the peptidoglycan chains, with concomitant formation of a 1,6-anhydrobond in the MurNAc residue.. Murein-degrading enzyme. May play a role in recycling of muropeptides during cell elongation and/or cell division. This chain is Membrane-bound lytic murein transglycosylase C, found in Mannheimia succiniciproducens (strain KCTC 0769BP / MBEL55E).